The primary structure comprises 66 residues: Phylloseptin-S1 (66 aa).

A signal peptide spans 1–22 (MAFLKKSLFLVLFLGLVSLSIC). A propeptide spanning residues 23 to 46 (EEEKRETEEEEHDQEEDDKSEEKR) is cleaved from the precursor. The tract at residues 25–44 (EKRETEEEEHDQEEDDKSEE) is disordered. The segment covering 30 to 41 (EEEEHDQEEDDK) has biased composition (acidic residues). Phenylalanine 65 is subject to Phenylalanine amide.

As to expression, expressed by the skin glands.

It localises to the secreted. The protein resides in the target cell membrane. Antimicrobial peptide with high activity against Gram-positive bacteria, low activity against Gram-negative bacteria, and moderate activity against fungi. Acts on bacterial biofilms (S.aureus) with the same potency than on bacteria. Acts by causing bacterial membrane disruption inducing leakage of the intracellular content followed by cell death. It adopts an alpha-helical amphipathic structure in membrane environments. Also shows highly potent antiparasitic activity against Leishmania species. Shows low hemolytic activity on horse and human erythrocytes (LC(50)=39 uM). Is also active on human monocytes (IC(50)=23 uM). The polypeptide is Phylloseptin-S1 (Phyllomedusa sauvagei (Sauvage's leaf frog)).